A 99-amino-acid polypeptide reads, in one-letter code: Protein dpy-30 homolog (99 aa).

Position 1 is an N-acetylmethionine (methionine 1). The tract at residues 1–26 is disordered; the sequence is MESEQMLEGQTQVAENPHSEYGLTDS. A Phosphoserine modification is found at serine 19. Position 35 is an N6-acetyllysine; alternate (lysine 35). Lysine 35 is covalently cross-linked (Glycyl lysine isopeptide (Lys-Gly) (interchain with G-Cter in SUMO2); alternate).

It belongs to the dpy-30 family. As to quaternary structure, homodimer. Core component of several methyltransferase-containing complexes including MLL1/MLL, MLL2/3 (also named ASCOM complex) and MLL4/WBP7. Each complex is at least composed of ASH2L, RBBP5, WDR5, DPY30, one or more specific histone methyltransferases (KMT2A/MLL1, KMT2D/MLL2, KMT2C/MLL3 and KMT2B/MLL4), and the facultative components MEN1, HCFC1, HCFC2, NCOA6, KDM6A, PAXIP1/PTIP, PAGR1 and alpha- and beta-tubulin PAXIP1/PTIP, PAGR1 and alpha- and beta-tubulin. Interacts with ASH2L. The interaction with ASH2L is direct. Interacts with ARFGEF1. Component of the SET1 complex, at least composed of the catalytic subunit (SETD1A or SETD1B), WDR5, WDR82, RBBP5, ASH2L/ASH2, CXXC1/CFP1, HCFC1 and DPY30.

The protein localises to the nucleus. It is found in the golgi apparatus. It localises to the trans-Golgi network. Its function is as follows. As part of the MLL1/MLL complex, involved in the methylation of histone H3 at 'Lys-4', particularly trimethylation. Histone H3 'Lys-4' methylation represents a specific tag for epigenetic transcriptional activation. May play some role in histone H3 acetylation. In embryonic stem (ES) cells, plays a crucial role in the differentiation potential, particularly along the neural lineage, regulating gene induction and histone H3 'Lys-4' methylation at key developmental loci, including that mediated by retinoic acid. Does not affect ES cell self-renewal. May also play an indirect or direct role in endosomal transport. This is Protein dpy-30 homolog (Dpy30) from Mus musculus (Mouse).